A 606-amino-acid chain; its full sequence is WD repeat-containing protein 1 (606 aa).

WD repeat units follow at residues 4-45 (EIKK…LRNI), 48-87 (PAVA…IWDT), 93-135 (ILKY…LWDT), 138-176 (SVGE…FFEG), 180-218 (KFKF…IYDG), 224-263 (VCAL…IWDV), 270-306 (STFP…YLDK), 311-351 (KPLR…YWDS), 358-408 (SFSG…KLDV), 432-474 (LKDQ…VYSI), 480-518 (KDEG…VFSV), 523-561 (SENN…VWTL), and 566-604 (TKVK…EWTI). Lys-28, Lys-81, Lys-95, and Lys-115 each carry N6-acetyllysine. Tyr-238 carries the phosphotyrosine modification. Lys-480 carries the post-translational modification N6-acetyllysine.

It belongs to the WD repeat AIP1 family.

The protein localises to the cytoplasm. Its subcellular location is the cytoskeleton. It is found in the cell projection. The protein resides in the podosome. Functionally, induces disassembly of actin filaments in conjunction with ADF/cofilin family proteins. Enhances cofilin-mediated actin severing. Involved in cytokinesis. Involved in chemotactic cell migration by restricting lamellipodial membrane protrusions. Involved in myocardium sarcomere organization. Required for cardiomyocyte growth and maintenance. Involved in megakaryocyte maturation and platelet shedding. Required for the establishment of planar cell polarity (PCP) during follicular epithelium development and for cell shape changes during PCP; the function seems to implicate cooperation with CFL1 and/or DSTN/ADF. Involved in the generation/maintenance of cortical tension. Involved in assembly and maintenance of epithelial apical cell junctions and plays a role in the organization of the perijunctional actomyosin belt. This Rattus norvegicus (Rat) protein is WD repeat-containing protein 1 (Wdr1).